The primary structure comprises 368 residues: Chorismate synthase (368 aa).

An NADP(+)-binding site is contributed by Arg46. FMN is bound by residues Arg124 to Ser126, Gly284, Lys299 to Ser303, and Arg326.

It belongs to the chorismate synthase family. FMNH2 is required as a cofactor.

The enzyme catalyses 5-O-(1-carboxyvinyl)-3-phosphoshikimate = chorismate + phosphate. The protein operates within metabolic intermediate biosynthesis; chorismate biosynthesis; chorismate from D-erythrose 4-phosphate and phosphoenolpyruvate: step 7/7. Catalyzes the anti-1,4-elimination of the C-3 phosphate and the C-6 proR hydrogen from 5-enolpyruvylshikimate-3-phosphate (EPSP) to yield chorismate, which is the branch point compound that serves as the starting substrate for the three terminal pathways of aromatic amino acid biosynthesis. This reaction introduces a second double bond into the aromatic ring system. The chain is Chorismate synthase from Pyrobaculum aerophilum (strain ATCC 51768 / DSM 7523 / JCM 9630 / CIP 104966 / NBRC 100827 / IM2).